Consider the following 884-residue polypeptide: Formin-like protein 11 (884 aa).

Residues 1-18 form the signal peptide; the sequence is MVYFRQIFLMIIVVSLHC. The segment at 89 to 143 is disordered; that stretch reads AESASFSPWPAPSPSPFPNGGPIESPAYPPAPPRPIPPHLRRPLPQRTHPLEQPE. Pro residues-rich tracts occupy residues 97–107 and 115–126; these read WPAPSPSPFPN and AYPPAPPRPIPP. The chain crosses the membrane as a helical span at residues 158 to 178; that stretch reads ILVPVVASTASAIGFVVCVVG. Disordered regions lie at residues 307-384, 416-469, and 512-532; these read SSDD…FSNK, SFPI…APLP, and MQSSTKNEEGKSKTPSPGKHL. Positions 329–343 are enriched in low complexity; sequence SNASSASGSVNVGSS. Over residues 346-358 the composition is skewed to basic and acidic residues; the sequence is FSEHKLDIPECSR. Composition is skewed to pro residues over residues 367 to 379 and 425 to 436; these read APPPPPPPPPPLP and QPRPPPPPPPPQ. Residues 461 to 884 enclose the FH2 domain; it reads LGKDGAPLPK…NSPSPLAPFR (424 aa).

Belongs to the formin-like family. Class-I subfamily.

It is found in the membrane. Its function is as follows. Might be involved in the organization and polarity of the actin cytoskeleton. This is Formin-like protein 11 (FH11) from Arabidopsis thaliana (Mouse-ear cress).